The sequence spans 377 residues: Homoserine O-acetyltransferase (377 aa).

Residues Asn-48 to Glu-347 enclose the AB hydrolase-1 domain. Ser-143 functions as the Nucleophile in the catalytic mechanism. Arg-213 serves as a coordination point for substrate. Residues Asp-311 and His-341 contribute to the active site. Asp-342 serves as a coordination point for substrate.

The protein belongs to the AB hydrolase superfamily. MetX family. Homodimer.

It is found in the cytoplasm. The enzyme catalyses L-homoserine + acetyl-CoA = O-acetyl-L-homoserine + CoA. It functions in the pathway amino-acid biosynthesis; L-methionine biosynthesis via de novo pathway; O-acetyl-L-homoserine from L-homoserine: step 1/1. In terms of biological role, transfers an acetyl group from acetyl-CoA to L-homoserine, forming acetyl-L-homoserine. The sequence is that of Homoserine O-acetyltransferase from Corynebacterium efficiens (strain DSM 44549 / YS-314 / AJ 12310 / JCM 11189 / NBRC 100395).